The chain runs to 844 residues: Saxiphilin (844 aa).

The N-terminal stretch at 1–19 is a signal peptide; it reads MAPTFQTALFFTIISLSFA. The region spanning 26 to 106 is the Transferrin-like 1; first part domain; it reads VRWCAISDLE…IAEPYSSNRD (81 aa). 19 cysteine pairs are disulfide-bonded: cysteine 29–cysteine 64, cysteine 39–cysteine 55, cysteine 110–cysteine 130, cysteine 141–cysteine 148, cysteine 150–cysteine 172, cysteine 180–cysteine 202, cysteine 222–cysteine 244, cysteine 277–cysteine 360, cysteine 322–cysteine 335, cysteine 332–cysteine 343, cysteine 388–cysteine 402, cysteine 495–cysteine 527, cysteine 505–cysteine 518, cysteine 552–cysteine 839, cysteine 570–cysteine 799, cysteine 607–cysteine 685, cysteine 641–cysteine 655, cysteine 652–cysteine 668, and cysteine 725–cysteine 739. Thyroglobulin type-1 domains lie at 107–172 and 177–244; these read LQKC…RATC and LPKC…PATC. Positions 109 to 249 are absent in transferrins; sequence KCLKERQQAL…IPATCQKHDL (141 aa). The Transferrin-like 1; second part domain maps to 245–482; it reads QKHDLVTTCH…LFHAMKALTG (238 aa). The Transferrin-like 2 domain occupies 492 to 828; the sequence is VRWCTINKLE…YYTTVYGASR (337 aa).

Belongs to the transferrin family. In terms of assembly, monomer. In terms of tissue distribution, plasma. Highest levels of transcripts found in the liver, the lung, the pancreas and the brain.

The protein localises to the secreted. In terms of biological role, binds specifically to the neurotoxin saxitoxin. Its physiological role may be to transport or sequester an endogenous organic molecule other than Fe(3+). It may participate in a detoxification mechanism for neutralizing a microbial toxin. The sequence is that of Saxiphilin from Aquarana catesbeiana (American bullfrog).